A 101-amino-acid polypeptide reads, in one-letter code: Acylphosphatase-1 (101 aa).

An N-acetylserine modification is found at serine 2. An N-acetylalanine modification is found at serine 2. The 91-residue stretch at 11-101 (SVDYEIFGKV…LDYTDFQIVK (91 aa)) folds into the Acylphosphatase-like domain. Catalysis depends on residues arginine 26 and asparagine 44.

This sequence belongs to the acylphosphatase family. Organ-common type isozyme is found in many different tissues.

The catalysed reaction is an acyl phosphate + H2O = a carboxylate + phosphate + H(+). The protein is Acylphosphatase-1 (ACYP1) of Bos taurus (Bovine).